The primary structure comprises 251 residues: Segregation and condensation protein A (251 aa).

Belongs to the ScpA family. As to quaternary structure, component of a cohesin-like complex composed of ScpA, ScpB and the Smc homodimer, in which ScpA and ScpB bind to the head domain of Smc. The presence of the three proteins is required for the association of the complex with DNA.

It localises to the cytoplasm. In terms of biological role, participates in chromosomal partition during cell division. May act via the formation of a condensin-like complex containing Smc and ScpB that pull DNA away from mid-cell into both cell halves. In Exiguobacterium sibiricum (strain DSM 17290 / CCUG 55495 / CIP 109462 / JCM 13490 / 255-15), this protein is Segregation and condensation protein A.